A 295-amino-acid chain; its full sequence is Outer surface protein B (295 aa).

Positions 1–16 (MKQYLLGFTLVFALIA) are cleaved as a signal peptide. Residue Cys-17 is the site of N-palmitoyl cysteine attachment. Cys-17 is lipidated: S-diacylglycerol cysteine.

The protein resides in the cell outer membrane. This is Outer surface protein B (ospB) from Borreliella burgdorferi (Lyme disease spirochete).